Here is a 327-residue protein sequence, read N- to C-terminus: MDQVHHRALDALQSFIALTDSSSATSPRYIASIITNATSSPHTYVFAELLERPAVQALRSPDTPAEFQSYLTLLEIFAWGTWQDYQQTPNLPPLSEEQARKLRLLTLLSLASTIKPLTYEALMTSLSLSAPSELESLVTTAIYSSLITGRLSPATNPPTVNVTSVAPLRDVKPSSLPTMISTLTAWEARCGSVISDIETEIAKIRADSAQRRQKEHARAVAIEKTLEKWNAEGGEQLQGGNPGQGQGQGQGGLGKNAGWKPRDLSTAMFERGFFGGGSNKREFDDDGYFDGGSSDFDQHGSGMDIDEGAGARASGARHSKRFLGKKS.

Residues 4 to 165 enclose the PCI domain; that stretch reads VHHRALDALQ…NPPTVNVTSV (162 aa). Disordered stretches follow at residues 233–260 and 276–327; these read GGEQLQGGNPGQGQGQGQGGLGKNAGWK and GGSN…GKKS. Over residues 236-255 the composition is skewed to gly residues; it reads QLQGGNPGQGQGQGQGGLGK. The segment covering 315–327 has biased composition (basic residues); the sequence is GARHSKRFLGKKS.

Belongs to the CSN7/EIF3M family. CSN7 subfamily. As to quaternary structure, component of the COP9 signalosome (CSN) complex. Present in uninduced vegetative hyphae, induced conidiating cultures and in both conidiospores and ascospores.

Its subcellular location is the cytoplasm. It localises to the nucleus. Functionally, component of the COP9 signalosome (CSN) complex that acts as an regulator of the ubiquitin (Ubl) conjugation pathway by mediating the deneddylation of the cullin subunit of SCF-type E3 ubiquitin-protein ligase complexes. The CSN complex seems to link protein degradation to sexual development. May be required for sporulation only at elevated temperatures. The protein is COP9 signalosome complex subunit 7 (csnG) of Emericella nidulans (strain FGSC A4 / ATCC 38163 / CBS 112.46 / NRRL 194 / M139) (Aspergillus nidulans).